A 1241-amino-acid polypeptide reads, in one-letter code: MMPHPVQLGKKTRMSYSQIDEVLEMPNLIDLQKDSYQWFLDEGLKEVFDDVSPIEDYTGNLILEFVDYSLDENPKYNIEDSKERDVTYAAPLKVKVRLINKTTGEVKEQEVFMGDFPLMTDTGTFIINGAERVIVNQLVRSPGVYYSREFDKTGKQLFSATVIPNRGAWLEYETDSNDIVSVRIDRTRKQPVTVLLRALGYGSDAQIKELLGEDERLLATLEKDSTKTTDEALLEIYKKLRPGEPPTVENAKSLLRTLFFDPKRYDLAKVGRYKFNKKLSLANRILGKKAAANIVDPSTGEILVEEGTKIDRETSIMVQDSGINEVFIYAEDNKVIKVLGNHFVNINKHIPFNIEELKISDKVYYPVLKEILDTFSQEEDIRDALKERAKELSPKHIIIADIIASISYEFNLAHDTGNIDDIDHLGNRRSRSVGELLQNQFRIGLSRMERVVKERMTIQDVDLATPQALINIRPVAAAIKEFFGSSQLSQFMDQNNPLSELTHKRRLSALGPGGLSRERAGFEVRDVHNSHYGRMCPIETPEGPNIGLINTLSTYARVNEYGFIESPYRKVDKKRGVVTNVIEYLTADEEDLLVIAQANEPLDEEGRFVNKRIACRMQFGAIDIAPANEVDYMDVSPKQVVSVATAMIPFLENDDANRALMGANMQRQAVPLLITDAPIIGTGMEYQSAKDSGVVILAKHDGVIDRLSSNEIVIKRDKDGQKDRYKLLKFKRSNQGTCINQRPIVSKGERVKAGDVIADGPSTNQGEIALGRNCLIGFMTWEGYNYEDAILINEKLVKEDSLTSIHIEEYEAEARDTKLGPEEITRDIPNVGEEALKDLDERGIIRIGAEVQSGDILVGKVTPKGETELTAEERLLRAIFGEKAREVRDTSLKVPHGESGIIVDIKVFSRENGDELPPGVNELVRAYIAQKRKINVGDKMAGRHGNKGVISRVLPAEDMPFLADGTPLEIVLNPLGVPSRMNIGQVLEVHLGLAAKSLGWNVATPVFDGANEHDIMDALEMAGFSRSGKVKLYDGRTGEPFDNDVTVGYMYMLKLHHLVDDKIHARSTGPYSLVTQQPLGGKAQFGGQRFGEMEVWALEAYGAAHTLQEILTVKSDDVVGRVKTYECIVKGENIPEPGVPESFKVLIKELQSLCLDVKVLTEEDSEIEIKESVEDDSGELSIEYGDLTYEADGELEIIEPAEEEQDTDVDYITEDDFESPDPEIDFDEKYLEDDFNSYDDF.

The tract at residues 1201 to 1224 is disordered; that stretch reads AEEEQDTDVDYITEDDFESPDPEI.

Belongs to the RNA polymerase beta chain family. As to quaternary structure, the RNAP catalytic core consists of 2 alpha, 1 beta, 1 beta' and 1 omega subunit. When a sigma factor is associated with the core the holoenzyme is formed, which can initiate transcription.

It carries out the reaction RNA(n) + a ribonucleoside 5'-triphosphate = RNA(n+1) + diphosphate. In terms of biological role, DNA-dependent RNA polymerase catalyzes the transcription of DNA into RNA using the four ribonucleoside triphosphates as substrates. This is DNA-directed RNA polymerase subunit beta from Alkaliphilus oremlandii (strain OhILAs) (Clostridium oremlandii (strain OhILAs)).